A 926-amino-acid chain; its full sequence is Rap guanine nucleotide exchange factor 3 (926 aa).

A Phosphoserine modification is found at Ser-79. In terms of domain architecture, DEP spans 110-186; the sequence is ATYPTLIRDR…RDAQFYRFPG (77 aa). Residues 218–242 form an interaction with PDE3B region; it reads TVALRKSPGQRTDEELDLIFEELVH. 3',5'-cyclic AMP is bound by residues 311 to 314 and 321 to 322; these read GQLA and RA. The disordered stretch occupies residues 369-388; it reads TSQGAGPSRPPTPGRNRYTV. Positions 384 to 521 constitute an N-terminal Ras-GEF domain; it reads NRYTVMSGTP…EQYPERRRHH (138 aa). The segment at 398–422 is interaction with PDE3B; sequence ELLLEAMRPDSSAHDPTETFLSDFL. Residues Ser-531 and Ser-867 each carry the phosphoserine modification. Residues 665–892 enclose the Ras-GEF domain; sequence SAKDLAGQLT…SRISTCSEQS (228 aa).

Interacts with PDE3B and PIK3R6; form a signaling complex that regulates phosphatidylinositol 3-kinase gamma in angiogenesis. In terms of tissue distribution, expressed at low levels in adult brain. Strongly expressed in parts of the neonatal brain, including the septum and the thalamus.

It localises to the cytoplasm. It is found in the membrane. In terms of biological role, guanine nucleotide exchange factor (GEF) for RAP1A and RAP2A small GTPases that is activated by binding cAMP. Through simultaneous binding of PDE3B to RAPGEF3 and PIK3R6 is assembled in a signaling complex in which it activates the PI3K gamma complex and which is involved in angiogenesis. Plays a role in the modulation of the cAMP-induced dynamic control of endothelial barrier function through a pathway that is independent on Rho-mediated signaling. Required for the actin rearrangement at cell-cell junctions, such as stress fibers and junctional actin. The protein is Rap guanine nucleotide exchange factor 3 (Rapgef3) of Rattus norvegicus (Rat).